The chain runs to 423 residues: MFSVNKRTQAFSVFLFFFSVPKVIRYLNKQRSLKEEEKRLEEFQLLLSKLKDVHLPLDLIVEILKKLPTKSLMRFRCVSKPWSFIISKRRDFVESIMARSLRQPPHKLPVFIFHQCDPGTFFTVSSTFSQSTKPKVSIMPGRNHYNAFRYQYVRGFICCSSSVYDLVTIYNPTTRQCLPLPKIESMVLSPKRHKHCYFGYDHVMNEYKVLAMVNDSQELTQTFHVFTLGRDCPQWRKIRGNIDYELISVSRAGVCIDGTIYYVAVRRKDNENYGELFMMSFDVKSERFYHVRTPETLWSPKCTERGLFNHQGKLGCISSNENNISMWIMENAEKQEWSNITFGLLEYPGGDFRTFSGITPAGEIFSMCYPFYNMPLCVHYYNVKQKSYRRVEIESTRLKTRKQPRDIIRVFAIHDFVENTMWL.

One can recognise an F-box domain in the interval 49–95 (KLKDVHLPLDLIVEILKKLPTKSLMRFRCVSKPWSFIISKRRDFVES).

In Arabidopsis thaliana (Mouse-ear cress), this protein is F-box protein At1g52495.